We begin with the raw amino-acid sequence, 170 residues long: Sec-independent protein translocase protein TatB (170 aa).

A helical transmembrane segment spans residues 1-21 (MIDLGISKLALIGAVALIVIG).

The protein belongs to the TatB family. As to quaternary structure, the Tat system comprises two distinct complexes: a TatABC complex, containing multiple copies of TatA, TatB and TatC subunits, and a separate TatA complex, containing only TatA subunits. Substrates initially bind to the TatABC complex, which probably triggers association of the separate TatA complex to form the active translocon.

The protein localises to the cell inner membrane. Part of the twin-arginine translocation (Tat) system that transports large folded proteins containing a characteristic twin-arginine motif in their signal peptide across membranes. Together with TatC, TatB is part of a receptor directly interacting with Tat signal peptides. TatB may form an oligomeric binding site that transiently accommodates folded Tat precursor proteins before their translocation. The protein is Sec-independent protein translocase protein TatB of Cupriavidus necator (strain ATCC 17699 / DSM 428 / KCTC 22496 / NCIMB 10442 / H16 / Stanier 337) (Ralstonia eutropha).